Here is a 214-residue protein sequence, read N- to C-terminus: Uridine kinase (214 aa).

15 to 22 lines the ATP pocket; the sequence is GASASGKS.

The protein belongs to the uridine kinase family.

It localises to the cytoplasm. It carries out the reaction uridine + ATP = UMP + ADP + H(+). The enzyme catalyses cytidine + ATP = CMP + ADP + H(+). The protein operates within pyrimidine metabolism; CTP biosynthesis via salvage pathway; CTP from cytidine: step 1/3. It participates in pyrimidine metabolism; UMP biosynthesis via salvage pathway; UMP from uridine: step 1/1. This is Uridine kinase from Aeromonas hydrophila subsp. hydrophila (strain ATCC 7966 / DSM 30187 / BCRC 13018 / CCUG 14551 / JCM 1027 / KCTC 2358 / NCIMB 9240 / NCTC 8049).